Consider the following 153-residue polypeptide: Superoxide dismutase [Cu-Zn] (153 aa).

Cu cation is bound by residues histidine 45, histidine 47, and histidine 62. Cysteine 56 and cysteine 145 form a disulfide bridge. The Zn(2+) site is built by histidine 62, histidine 70, histidine 79, and aspartate 82. Cu cation is bound at residue histidine 119.

Belongs to the Cu-Zn superoxide dismutase family. Homodimer. Requires Cu cation as cofactor. Zn(2+) is required as a cofactor.

Its subcellular location is the cytoplasm. It catalyses the reaction 2 superoxide + 2 H(+) = H2O2 + O2. Functionally, destroys radicals which are normally produced within the cells and which are toxic to biological systems. This chain is Superoxide dismutase [Cu-Zn] (Sod), found in Chymomyza amoena.